Here is a 496-residue protein sequence, read N- to C-terminus: UDP-N-acetylmuramoylalanine--D-glutamate ligase (496 aa).

Position 130-136 (130-136) interacts with ATP; sequence GTNGKTT.

This sequence belongs to the MurCDEF family. In terms of assembly, interacts with PknA. In terms of processing, phosphorylated by PknA.

It is found in the cytoplasm. It catalyses the reaction UDP-N-acetyl-alpha-D-muramoyl-L-alanine + D-glutamate + ATP = UDP-N-acetyl-alpha-D-muramoyl-L-alanyl-D-glutamate + ADP + phosphate + H(+). It functions in the pathway cell wall biogenesis; peptidoglycan biosynthesis. Cell wall formation. Catalyzes the addition of glutamate to the nucleotide precursor UDP-N-acetylmuramoyl-L-alanine (UMA). This chain is UDP-N-acetylmuramoylalanine--D-glutamate ligase, found in Mycobacterium tuberculosis (strain ATCC 25177 / H37Ra).